A 154-amino-acid polypeptide reads, in one-letter code: MLGFRQTATAIVRPVGTIGYARRCYHPKVIDHYTNPRNVGTLDKKLTNVGTGLVGAPACGDVMRLQIQVDDSTGVIENVKFKTFGCGSAIASSSYMTELVRGKTLADAEKIKNTEIARELSLPPVKLHCSMLAEDAIKAAIKDYRSKRKATELR.

It belongs to the NifU family. In terms of assembly, component of the core Fe-S cluster (ISC) assembly machinery. The cofactor is [2Fe-2S] cluster.

Its subcellular location is the mitochondrion matrix. It functions in the pathway cofactor biosynthesis; iron-sulfur cluster biosynthesis. Functionally, scaffold protein for the de novo synthesis of iron-sulfur (Fe-S) clusters within mitochondria, which is required for maturation of both mitochondrial and cytoplasmic [2Fe-2S] and [4Fe-4S] proteins. First, a [2Fe-2S] cluster is transiently assembled on the scaffold protein ISU1. In a second step, the cluster is released from ISU1, transferred to a glutaredoxin, followed by the formation of mitochondrial [2Fe-2S] proteins, the synthesis of [4Fe-4S] clusters and their target-specific insertion into the recipient apoproteins. Cluster assembly on ISU1 depends on the function of the cysteine desulfurase complex NFS1-ISD11, which serves as the sulfur donor for cluster synthesis, the iron-binding protein frataxin as the putative iron donor, and the electron transfer chain comprised of ferredoxin reductase and ferredoxin, which receive their electrons from NADH. This Eremothecium gossypii (strain ATCC 10895 / CBS 109.51 / FGSC 9923 / NRRL Y-1056) (Yeast) protein is Iron sulfur cluster assembly protein 1, mitochondrial (ISU1).